We begin with the raw amino-acid sequence, 213 residues long: 3-isopropylmalate dehydratase small subunit (213 aa).

The protein belongs to the LeuD family. LeuD type 1 subfamily. In terms of assembly, heterodimer of LeuC and LeuD.

The catalysed reaction is (2R,3S)-3-isopropylmalate = (2S)-2-isopropylmalate. It participates in amino-acid biosynthesis; L-leucine biosynthesis; L-leucine from 3-methyl-2-oxobutanoate: step 2/4. Functionally, catalyzes the isomerization between 2-isopropylmalate and 3-isopropylmalate, via the formation of 2-isopropylmaleate. This Pseudomonas syringae pv. tomato (strain ATCC BAA-871 / DC3000) protein is 3-isopropylmalate dehydratase small subunit.